A 934-amino-acid polypeptide reads, in one-letter code: ATP-dependent RNA helicase dbp-10 (934 aa).

The segment at 21-43 is disordered; that stretch reads LFNNDSDFEDNSSKHHTKKGAVT. The Q motif signature appears at 99–127; that stretch reads GGFQAMGLNAHLLRAITRKGFSVPTPIQR. Residues 130-302 form the Helicase ATP-binding domain; it reads IPLILERKDV…RAGLQEPSLV (173 aa). ATP is bound at residue 143 to 150; that stretch reads ARTGSGKT. The DEAD box motif lies at 250–253; the sequence is DEAD. Disordered regions lie at residues 343–370, 613–722, and 851–934; these read GPPEGTKEESDELQARKRKREYRPNPKE, ELGP…FQDP, and GAQP…RQKR. Positions 359-513 constitute a Helicase C-terminal domain; it reads KRKREYRPNP…KNPSFAADVV (155 aa). Composition is skewed to acidic residues over residues 644–654 and 662–700; these read DEDDEDVDMED and EETNAFEDFEDEEEEGEAEEAEEAEAKEDPYADDSDSEM. A compositionally biased stretch (basic and acidic residues) spans 864-926; the sequence is EKAPKDADKF…VAEKKREKNA (63 aa).

Belongs to the DEAD box helicase family. DDX54/DBP10 subfamily.

The protein localises to the nucleus. It is found in the nucleolus. It catalyses the reaction ATP + H2O = ADP + phosphate + H(+). Functionally, ATP-binding RNA helicase involved in the biogenesis of 60S ribosomal subunits and is required for the normal formation of 25S and 5.8S rRNAs. The polypeptide is ATP-dependent RNA helicase dbp-10 (dbp-10) (Neurospora crassa (strain ATCC 24698 / 74-OR23-1A / CBS 708.71 / DSM 1257 / FGSC 987)).